Here is a 343-residue protein sequence, read N- to C-terminus: Ribosomal RNA small subunit methyltransferase C (343 aa).

This sequence belongs to the methyltransferase superfamily. RsmC family. As to quaternary structure, monomer.

The protein localises to the cytoplasm. It carries out the reaction guanosine(1207) in 16S rRNA + S-adenosyl-L-methionine = N(2)-methylguanosine(1207) in 16S rRNA + S-adenosyl-L-homocysteine + H(+). Functionally, specifically methylates the guanine in position 1207 of 16S rRNA in the 30S particle. The sequence is that of Ribosomal RNA small subunit methyltransferase C from Escherichia coli O1:K1 / APEC.